The following is a 655-amino-acid chain: MGIFSIANQHIRFAVKLACAIVLALFIGFHFQLETPRWAVLTAAIVAAGPAFAAGGEPYSGAIRYRGMLRIIGTFIGCIAALIIIISMIRAPLLMILVCCVWAGFCTWISSLVRIENSYAWGLSGYTALIIVITIQTEPLLTPQFALERCSEIVIGIGCAILADLLFSPRSIKQEVDRELDSLLVAQYQLMQLCIKHGDSEEVDNAWGDLVRRTAALEGMRSNLNMESSRWVRANRRLKALNTLSLTLITQSCETYLIQNTRPELITDTFRELFETPVETVQDVHRQLKRMRRVIVWTGERETPVTLYSWVGAATRYLLLKRGVISNTKISATEEEILQGEPVVKVESAERHHAMVNFWRTTLSCILGTLFWLWTGWTSGNGAMVMIAVVTSLAMRLPNPRMVCIDFIYGTLAALPLGLLYFLVIIPNTQQSMLLLCLSLAVLGFFIGIEVQKRRLGSMGALASTINIIVLDNPMTFHFSQFLDSALGQIVGCMLAFIVILLVRDKSKDRTGRVLLNQFVSAAVSAMTTNVVRRKENRLPALYQQLFLLMNKFPGDLPKFRLALTMIIAHQRLRDAPIPVNEDLSVFHRQLRRTADHVISAGSDDKRRRYFGLLLDELDIYQEKLRIWEAPPQVTEPVKRLTGMLHKYQNALTDS.

A run of 11 helical transmembrane segments spans residues 13-33, 38-58, 69-89, 93-113, 121-141, 152-172, 370-390, 407-427, 431-451, 459-479, and 482-502; these read FAVK…HFQL, WAVL…GGEP, LRII…ISMI, LLMI…SSLV, WGLS…EPLL, EIVI…PRSI, LFWL…IAVV, FIYG…VIIP, QSML…GIEV, MGAL…TFHF, and FLDS…VILL.

The protein belongs to the aromatic acid exporter ArAE (TC 2.A.85) family.

Its subcellular location is the cell inner membrane. In terms of biological role, forms an efflux pump with AaeA. Could function as a metabolic relief valve, allowing to eliminate certain compounds when they accumulate to high levels in the cell. In Salmonella agona (strain SL483), this protein is p-hydroxybenzoic acid efflux pump subunit AaeB.